The primary structure comprises 126 residues: MAILGLGTDIAEIERIEKALGRSGEPFAQRILSEDEMAKFSQLKQQGRYLAKRFAAKEAASKALGTGIAQGVTFHDFTVSNDELGKPVLMLSGVAQKMAQTMGVNHVHLSISDERHYAVATVILES.

Mg(2+) contacts are provided by D9 and E58.

It belongs to the P-Pant transferase superfamily. AcpS family. Requires Mg(2+) as cofactor.

It is found in the cytoplasm. The catalysed reaction is apo-[ACP] + CoA = holo-[ACP] + adenosine 3',5'-bisphosphate + H(+). Functionally, transfers the 4'-phosphopantetheine moiety from coenzyme A to a Ser of acyl-carrier-protein. In Vibrio parahaemolyticus serotype O3:K6 (strain RIMD 2210633), this protein is Holo-[acyl-carrier-protein] synthase.